We begin with the raw amino-acid sequence, 353 residues long: Photosystem II protein D1 (353 aa).

Threonine 2 bears the N-acetylthreonine mark. Residue threonine 2 is modified to Phosphothreonine. 3 helical membrane-spanning segments follow: residues tyrosine 29 to serine 46, histidine 118 to leucine 133, and tryptophan 142 to alanine 156. Chlorophyll a is bound at residue histidine 118. Tyrosine 126 contacts pheophytin a. Positions 170 and 189 each coordinate [CaMn4O5] cluster. Residues phenylalanine 197–leucine 218 form a helical membrane-spanning segment. Histidine 198 is a chlorophyll a binding site. Residues histidine 215 and serine 264–phenylalanine 265 contribute to the a quinone site. Position 215 (histidine 215) interacts with Fe cation. Residue histidine 272 participates in Fe cation binding. A helical transmembrane segment spans residues phenylalanine 274 to leucine 288. Histidine 332, glutamate 333, aspartate 342, and alanine 344 together coordinate [CaMn4O5] cluster. The propeptide occupies serine 345 to alanine 353.

The protein belongs to the reaction center PufL/M/PsbA/D family. PSII is composed of 1 copy each of membrane proteins PsbA, PsbB, PsbC, PsbD, PsbE, PsbF, PsbH, PsbI, PsbJ, PsbK, PsbL, PsbM, PsbT, PsbX, PsbY, PsbZ, Psb30/Ycf12, at least 3 peripheral proteins of the oxygen-evolving complex and a large number of cofactors. It forms dimeric complexes. It depends on The D1/D2 heterodimer binds P680, chlorophylls that are the primary electron donor of PSII, and subsequent electron acceptors. It shares a non-heme iron and each subunit binds pheophytin, quinone, additional chlorophylls, carotenoids and lipids. D1 provides most of the ligands for the Mn4-Ca-O5 cluster of the oxygen-evolving complex (OEC). There is also a Cl(-1) ion associated with D1 and D2, which is required for oxygen evolution. The PSII complex binds additional chlorophylls, carotenoids and specific lipids. as a cofactor. In terms of processing, tyr-161 forms a radical intermediate that is referred to as redox-active TyrZ, YZ or Y-Z. C-terminally processed by CTPA; processing is essential to allow assembly of the oxygen-evolving complex and thus photosynthetic growth.

Its subcellular location is the plastid. It localises to the chloroplast thylakoid membrane. The enzyme catalyses 2 a plastoquinone + 4 hnu + 2 H2O = 2 a plastoquinol + O2. In terms of biological role, photosystem II (PSII) is a light-driven water:plastoquinone oxidoreductase that uses light energy to abstract electrons from H(2)O, generating O(2) and a proton gradient subsequently used for ATP formation. It consists of a core antenna complex that captures photons, and an electron transfer chain that converts photonic excitation into a charge separation. The D1/D2 (PsbA/PsbD) reaction center heterodimer binds P680, the primary electron donor of PSII as well as several subsequent electron acceptors. The protein is Photosystem II protein D1 of Oltmannsiellopsis viridis (Marine flagellate).